The following is a 699-amino-acid chain: Extracellular matrix protein 2 (699 aa).

The signal sequence occupies residues 1–20 (MKIAVLFCFFLLIIFQTDFG). The VWFC domain occupies 101 to 158 (GHCLVKGITMYNKAVWSPEPCTTCLCSDGRVLCDETMCHPQRCPQTVIPEGECCPVCS). The segment covering 176–186 (EFSGDSSEQRE) has biased composition (basic and acidic residues). The disordered stretch occupies residues 176-316 (EFSGDSSEQR…PAPPRGTLRL (141 aa)). A compositionally biased stretch (acidic residues) spans 212–224 (QSEEDEEVKEEDT). Over residues 243 to 260 (GDSRGGDRKQRPGEERRL) the composition is skewed to basic and acidic residues. Residues 270 to 291 (EEEEDEEEEGEEGEEDEEDEED) show a composition bias toward acidic residues. Positions 294–296 (RGD) match the Cell attachment site motif. One can recognise an LRRNT domain in the interval 307-344 (PAPPRGTLRLPSGCSLSYRTISCINAMLTQIPPLTAPQ). LRR repeat units lie at residues 368–388 (NLER…GPKA), 394–415 (KLMR…LPST), 416–436 (LEEL…SLSD), 439–459 (QLVT…NPLA), 465–484 (SLAY…QGLP), 486–507 (SIEE…CFNH), 510–530 (KINV…APLA), 536–557 (NLES…LPKS), 558–578 (LLHL…VFGH), 582–602 (GLEY…DRVS), 609–630 (SLRE…IQEM), 632–653 (ALHF…EICN), and 661–684 (NLEH…TFSC). N378 carries N-linked (GlcNAc...) asparagine glycosylation. The N-linked (GlcNAc...) asparagine glycan is linked to N449. Residue N506 is glycosylated (N-linked (GlcNAc...) asparagine).

It belongs to the small leucine-rich proteoglycan (SLRP) family. SLRP class I subfamily. In terms of assembly, interacts with numerous extracellular matrix proteins. Interacts with MSL1 and RASSF1. As to expression, expressed predominantly in adipose tissue as well as female-specific organs such as mammary gland, ovary, and uterus.

It is found in the secreted. It localises to the extracellular space. The protein localises to the extracellular matrix. In terms of biological role, promotes matrix assembly and cell adhesiveness. This chain is Extracellular matrix protein 2 (ECM2), found in Homo sapiens (Human).